The chain runs to 332 residues: Putative D-threonate 4-phosphate dehydrogenase (332 aa).

Residues His140 and Thr141 each coordinate substrate. A divalent metal cation-binding residues include His170, His214, and His270. Residues Lys278, Asn287, and Arg296 each contribute to the substrate site.

Belongs to the PdxA family. PdxA2 subfamily. Homodimer. The cofactor is a divalent metal cation.

It carries out the reaction 4-O-phospho-D-threonate + NAD(+) = dihydroxyacetone phosphate + CO2 + NADH. In terms of biological role, catalyzes the NAD-dependent oxidation and subsequent decarboxylation of D-threonate 4-phosphate to produce dihydroxyacetone phosphate (DHAP). The chain is Putative D-threonate 4-phosphate dehydrogenase from Oceanobacillus iheyensis (strain DSM 14371 / CIP 107618 / JCM 11309 / KCTC 3954 / HTE831).